We begin with the raw amino-acid sequence, 184 residues long: ATP synthase subunit b, chloroplastic (184 aa).

A helical transmembrane segment spans residues 27–49 (LATNPINLSVVLGVLIFFGKGVL).

The protein belongs to the ATPase B chain family. In terms of assembly, F-type ATPases have 2 components, F(1) - the catalytic core - and F(0) - the membrane proton channel. F(1) has five subunits: alpha(3), beta(3), gamma(1), delta(1), epsilon(1). F(0) has four main subunits: a(1), b(1), b'(1) and c(10-14). The alpha and beta chains form an alternating ring which encloses part of the gamma chain. F(1) is attached to F(0) by a central stalk formed by the gamma and epsilon chains, while a peripheral stalk is formed by the delta, b and b' chains.

Its subcellular location is the plastid. It is found in the chloroplast thylakoid membrane. Functionally, f(1)F(0) ATP synthase produces ATP from ADP in the presence of a proton or sodium gradient. F-type ATPases consist of two structural domains, F(1) containing the extramembraneous catalytic core and F(0) containing the membrane proton channel, linked together by a central stalk and a peripheral stalk. During catalysis, ATP synthesis in the catalytic domain of F(1) is coupled via a rotary mechanism of the central stalk subunits to proton translocation. Component of the F(0) channel, it forms part of the peripheral stalk, linking F(1) to F(0). The polypeptide is ATP synthase subunit b, chloroplastic (Cuscuta exaltata (Tall dodder)).